The chain runs to 380 residues: uncharacterized protein (380 aa).

A signal peptide spans 1–18 (MALRHLALLAGLLVGVAS). N-linked (GlcNAc...) asparagine glycosylation is found at N104, N111, and N128. A helical transmembrane segment spans residues 148–168 (LFLGTFFISSGLILSVAGFFY). Disordered stretches follow at residues 229–256 (PQTG…QGQG) and 336–380 (RFSG…ISNV). Residues 240 to 249 (PPLPGSPGDP) are compositionally biased toward pro residues. A compositionally biased stretch (basic and acidic residues) spans 356–366 (VRRERPLDRAT).

It is found in the membrane. This is an uncharacterized protein from Homo sapiens (Human).